The sequence spans 335 residues: Probable tRNA N6-adenosine threonylcarbamoyltransferase (335 aa).

Residues His-109, His-113, and Tyr-130 each coordinate a divalent metal cation. Substrate contacts are provided by residues 130-134 (YVSGG), Asp-162, Gly-177, Glu-181, and Asn-266. An a divalent metal cation-binding site is contributed by Asp-294.

Belongs to the KAE1 / TsaD family. In terms of assembly, component of the EKC/KEOPS complex; the whole complex dimerizes. A divalent metal cation serves as cofactor.

It is found in the cytoplasm. It localises to the nucleus. The catalysed reaction is L-threonylcarbamoyladenylate + adenosine(37) in tRNA = N(6)-L-threonylcarbamoyladenosine(37) in tRNA + AMP + H(+). Its function is as follows. Component of the EKC/KEOPS complex that is required for the formation of a threonylcarbamoyl group on adenosine at position 37 (t(6)A37) in tRNAs that read codons beginning with adenine. The complex is probably involved in the transfer of the threonylcarbamoyl moiety of threonylcarbamoyl-AMP (TC-AMP) to the N6 group of A37. Osgep likely plays a direct catalytic role in this reaction, but requires other protein(s) of the complex to fulfill this activity. This chain is Probable tRNA N6-adenosine threonylcarbamoyltransferase, found in Nematostella vectensis (Starlet sea anemone).